Consider the following 349-residue polypeptide: DNA fragmentation factor subunit beta (349 aa).

Residues 7–83 (QPKCVKLRAL…LLTAGETWHG (77 aa)) form the CIDE-N domain. A disordered region spans residues 319–349 (RSRIYRPQTGSRRKQPPRKQPPRKRPPRKRQ). Residues 329–349 (SRRKQPPRKQPPRKRPPRKRQ) are compositionally biased toward basic residues.

Heterodimer of DFFA and DFFB. Interacts with H1-1.

It is found in the cytoplasm. Its subcellular location is the nucleus. Its activity is regulated as follows. Inhibited by DFFA (DFF45). Functionally, nuclease that induces DNA fragmentation and chromatin condensation during apoptosis. Degrades naked DNA and induces apoptotic morphology. This Rattus norvegicus (Rat) protein is DNA fragmentation factor subunit beta (Dffb).